A 66-amino-acid chain; its full sequence is Large ribosomal subunit protein uL29 (66 aa).

Belongs to the universal ribosomal protein uL29 family.

The polypeptide is Large ribosomal subunit protein uL29 (Caldanaerobacter subterraneus subsp. tengcongensis (strain DSM 15242 / JCM 11007 / NBRC 100824 / MB4) (Thermoanaerobacter tengcongensis)).